A 188-amino-acid polypeptide reads, in one-letter code: Pyridoxal 5'-phosphate synthase subunit PdxT (188 aa).

46-48 (GES) serves as a coordination point for L-glutamine. Cys-78 functions as the Nucleophile in the catalytic mechanism. L-glutamine is bound by residues Arg-106 and 132-133 (IR). Residues His-169 and Glu-171 each act as charge relay system in the active site.

This sequence belongs to the glutaminase PdxT/SNO family. As to quaternary structure, in the presence of PdxS, forms a dodecamer of heterodimers. Only shows activity in the heterodimer.

The catalysed reaction is aldehydo-D-ribose 5-phosphate + D-glyceraldehyde 3-phosphate + L-glutamine = pyridoxal 5'-phosphate + L-glutamate + phosphate + 3 H2O + H(+). It carries out the reaction L-glutamine + H2O = L-glutamate + NH4(+). Its pathway is cofactor biosynthesis; pyridoxal 5'-phosphate biosynthesis. In terms of biological role, catalyzes the hydrolysis of glutamine to glutamate and ammonia as part of the biosynthesis of pyridoxal 5'-phosphate. The resulting ammonia molecule is channeled to the active site of PdxS. The protein is Pyridoxal 5'-phosphate synthase subunit PdxT of Tropheryma whipplei (strain TW08/27) (Whipple's bacillus).